The sequence spans 483 residues: MGSDHHHRKLHVMFFPFMAYGHMIPTLDMAKLFSSRGAKSTILTTSLNSKILQKPIDTFKNLNPGLEIDIQIFNFPCVELGLPEGCENVDFFTSNNNDDKNEMIVKFFFSTRFFKDQLEKLLGTTRPDCLIADMFFPWATEAAGKFNVPRLVFHGTGYFSLCAGYCIGVHKPQKRVASSSEPFVIPELPGNIVITEEQIIDGDGESDMGKFMTEVRESEVKSSGVVLNSFYELEHDYADFYKSCVQKRAWHIGPLSVYNRGFEEKAERGKKANIDEAECLKWLDSKKPNSVIYVSFGSVAFFKNEQLFEIAAGLEASGTSFIWVVRKTKDDREEWLPEGFEERVKGKGMIIRGWAPQVLILDHQATGGFVTHCGWNSLLEGVAAGLPMVTWPVGAEQFYNEKLVTQVLRTGVSVGASKHMKVMMGDFISREKVDKAVREVLAGEAAEERRRRAKKLAAMAKAAVEEGGSSFNDLNSFMEEFSS.

Catalysis depends on H22, which acts as the Proton acceptor. H22 provides a ligand contact to an anthocyanidin. D133 serves as the catalytic Charge relay. Positions 355, 357, 372, 375, 376, 377, and 380 each coordinate UDP-alpha-D-glucose. Position 395 (A395) interacts with an anthocyanidin. Residues E396 and Q397 each contribute to the UDP-alpha-D-glucose site.

Belongs to the UDP-glycosyltransferase family. As to expression, expressed in roots and flowers.

The catalysed reaction is a 7-O-hydroxy-flavonol + UDP-alpha-D-glucose = a flavonol 7-O-beta-D-glucoside + UDP + H(+). Its pathway is secondary metabolite biosynthesis; flavonoid biosynthesis. In terms of biological role, catalyzes the glycosylation of flavonoids from UDP-glucose. Uses a wide range of flavonoid substrates including flavonols (quercetin, kaempferol, isorhamnetin, 3-OH 7,2',4'-MeO-flavone), flavones (luteolin, apigenin), flavanones (naringenin, hesperetin), flavanonols (taxifolin), isoflavones (genistein, daidzein), flavonol glycosides (quercitrin, isoquercitrin, rutin), and chalcones (isoliquiritigenin). Specific for the C-7 position, with a 20-fold lower activity for the C-3 position. The chain is UDP-glucosyl transferase 73B2 (UGT73B2) from Arabidopsis thaliana (Mouse-ear cress).